The following is a 257-amino-acid chain: Phosphonates import ATP-binding protein PhnC 1 (257 aa).

In terms of domain architecture, ABC transporter spans 2–246 (IELKNVSKVY…VFKDIYGRPL (245 aa)). 35-42 (GLSGAGKS) contributes to the ATP binding site.

This sequence belongs to the ABC transporter superfamily. Phosphonates importer (TC 3.A.1.9.1) family. As to quaternary structure, the complex is composed of two ATP-binding proteins (PhnC), two transmembrane proteins (PhnE) and a solute-binding protein (PhnD).

The protein localises to the cell membrane. It catalyses the reaction phosphonate(out) + ATP + H2O = phosphonate(in) + ADP + phosphate + H(+). Functionally, part of the ABC transporter complex PhnCDE involved in phosphonates import. Responsible for energy coupling to the transport system. The sequence is that of Phosphonates import ATP-binding protein PhnC 1 from Halalkalibacterium halodurans (strain ATCC BAA-125 / DSM 18197 / FERM 7344 / JCM 9153 / C-125) (Bacillus halodurans).